A 448-amino-acid chain; its full sequence is Homogentisate 1,2-dioxygenase (448 aa).

Residue His302 is the Proton acceptor of the active site. His345 and Glu351 together coordinate Fe cation. Positions 360 and 381 each coordinate homogentisate. His381 serves as a coordination point for Fe cation.

Belongs to the homogentisate dioxygenase family. Hexamer; dimer of trimers. Requires Fe cation as cofactor.

It carries out the reaction homogentisate + O2 = 4-maleylacetoacetate + H(+). It participates in amino-acid degradation; L-phenylalanine degradation; acetoacetate and fumarate from L-phenylalanine: step 4/6. Its function is as follows. Involved in the catabolism of homogentisate (2,5-dihydroxyphenylacetate or 2,5-OH-PhAc), a central intermediate in the degradation of phenylalanine and tyrosine. Catalyzes the oxidative ring cleavage of the aromatic ring of homogentisate to yield maleylacetoacetate. In Ralstonia pickettii (strain 12J), this protein is Homogentisate 1,2-dioxygenase.